A 155-amino-acid chain; its full sequence is uncharacterized protein (155 aa).

Residues 1–34 (MESLQTPQHRENQDKREKEYGVKHMPMGNNAGNL) form a disordered region. Residues 8–22 (QHRENQDKREKEYGV) show a composition bias toward basic and acidic residues. The helical transmembrane segment at 115–135 (MSLLLLPAFSGLTWAPFLFLF) threads the bilayer.

The protein resides in the membrane. This is an uncharacterized protein from Homo sapiens (Human).